A 718-amino-acid chain; its full sequence is Sodium/myo-inositol cotransporter (718 aa).

Residues 1–9 (MRAVLDTAD) are Extracellular-facing. The helical transmembrane segment at 10 to 29 (IAIVALYFILVMCIGFFAMW) threads the bilayer. Residues 30 to 38 (KSNRSTVSG) are Cytoplasmic-facing. A helical membrane pass occupies residues 39–57 (YFLAGRSMTWVAIGASLFV). At 58–86 (SNIGSEHFIGLAGSGAASGFAVGAWEFNA) the chain is on the extracellular side. Residues 87–110 (LLLLQLLGWVFIPIYIRSGVYTMP) form a helical membrane-spanning segment. The Cytoplasmic segment spans residues 111 to 123 (EYLSKRFGGHRIQ). The helical transmembrane segment at 124-144 (VYFAALSLILYIFTKLSVDLY) threads the bilayer. The Extracellular portion of the chain corresponds to 145-157 (SGALFIQESLGWN). A helical membrane pass occupies residues 158–183 (LYVSVILLIGMTALLTVTGGLVAVIY). Over 184–186 (TDT) the chain is Cytoplasmic. A helical membrane pass occupies residues 187–205 (LQALLMIIGALTLMIISIM). Residues 206–303 (EIGGFEEVKR…HAKGSTLMAG (98 aa)) are Extracellular-facing. N232 carries an N-linked (GlcNAc...) asparagine glycan. A helical transmembrane segment spans residues 304 to 324 (FLKLLPMFIIVVPGMISRILF). Residues 325–353 (TDDIACINPEHCMLVCGSRAGCSNIAYPR) lie on the Cytoplasmic side of the membrane. A helical membrane pass occupies residues 354–376 (LVMKLVPVGLRGLMMAVMIAALM). Topologically, residues 377–406 (SDLDSIFNSASTIFTLDVYKLIRKSASSRE) are extracellular. A helical membrane pass occupies residues 407–430 (LMIVGRIFVAFMVVISIAWVPIIV). Over 431–443 (EMQGGQMYLYIQE) the chain is Cytoplasmic. The helical transmembrane segment at 444–462 (VADYLTPPVAALFLLAIFW) threads the bilayer. Residues 463-510 (KRCNEQGAFYGGMAGFVLGAVRLILAFAYRAPECDQPDNRPGFIKDIH) lie on the Extracellular side of the membrane. Residues 511–532 (YMYVATGLFWVTGLITVIVSLL) form a helical membrane-spanning segment. Over 533 to 695 (TPPPTKEQIR…QMLEETRQVK (163 aa)) the chain is Cytoplasmic. A phosphoserine mark is found at S594 and S632. The helical transmembrane segment at 696–716 (VILNIGLFAVCSLGIFMFVYF) threads the bilayer. Residues 717–718 (SL) are Extracellular-facing.

The protein belongs to the sodium:solute symporter (SSF) (TC 2.A.21) family. As to quaternary structure, interacts with KCNQ2 (via the pore module). Interacts with KCNQ1; this interaction is direct. Forms coregulatory complexes with ion channels KCNQ2-KCNQ3 and KCNQ1-KCNE2.

The protein resides in the apical cell membrane. Its subcellular location is the basolateral cell membrane. The catalysed reaction is myo-inositol(out) + 2 Na(+)(out) = myo-inositol(in) + 2 Na(+)(in). The enzyme catalyses scyllo-inositol(out) + 2 Na(+)(out) = scyllo-inositol(in) + 2 Na(+)(in). Electrogenic Na(+)-coupled sugar symporter that actively transports myo-inositol and its stereoisomer scyllo-inositol across the plasma membrane, with a Na(+) to sugar coupling ratio of 2:1. Maintains myo-inositol concentration gradient that defines cell volume and fluid balance during osmotic stress, in particular in the fetoplacental unit and central nervous system. Forms coregulatory complexes with voltage-gated K(+) ion channels, allosterically altering ion selectivity, voltage dependence and gating kinetics of the channel. In turn, K(+) efflux through the channel forms a local electrical gradient that modulates electrogenic Na(+)-coupled myo-inositol influx through the transporter. Associates with KCNQ1-KCNE2 channel in the apical membrane of choroid plexus epithelium and regulates the myo-inositol gradient between blood and cerebrospinal fluid with an impact on neuron excitability. Associates with KCNQ2-KCNQ3 channel altering ion selectivity, increasing Na(+) and Cs(+) permeation relative to K(+) permeation. Provides myo-inositol precursor for biosynthesis of phosphoinositides such as PI(4,5)P2, thus indirectly affecting the activity of phosphoinositide-dependent ion channels and Ca(2+) signaling upon osmotic stress. The polypeptide is Sodium/myo-inositol cotransporter (Homo sapiens (Human)).